The sequence spans 124 residues: Small ribosomal subunit protein uS12 (124 aa).

Asp89 is subject to 3-methylthioaspartic acid.

It belongs to the universal ribosomal protein uS12 family. Part of the 30S ribosomal subunit. Contacts proteins S8 and S17. May interact with IF1 in the 30S initiation complex.

With S4 and S5 plays an important role in translational accuracy. Its function is as follows. Interacts with and stabilizes bases of the 16S rRNA that are involved in tRNA selection in the A site and with the mRNA backbone. Located at the interface of the 30S and 50S subunits, it traverses the body of the 30S subunit contacting proteins on the other side and probably holding the rRNA structure together. The combined cluster of proteins S8, S12 and S17 appears to hold together the shoulder and platform of the 30S subunit. The protein is Small ribosomal subunit protein uS12 of Shewanella oneidensis (strain ATCC 700550 / JCM 31522 / CIP 106686 / LMG 19005 / NCIMB 14063 / MR-1).